The chain runs to 107 residues: Circadian clock oscillator protein KaiB (107 aa).

The protein belongs to the KaiB family. May undergo a major conformational rearrangment; in the free state forms homooligomers. When bound to KaiC switches to a monomeric thioredoxin-fold (KaiB(fs)). The active oscillator complex is probably KaiC(6):KaiB(6).

In terms of biological role, component of the KaiBC clock protein complex, which constitutes the main circadian regulator in cyanobacteria; it may modify the ATPase activity of KaiC. May be a metamorphic protein which reversibly switches between an inactive tetrameric fold and a rare, thioredoxin-like monomeric fold (KaiB(fs)). KaiB(fs) binds phospho-KaiC, and perhaps clock output effectors. This is Circadian clock oscillator protein KaiB from Prochlorococcus marinus (strain NATL2A).